A 546-amino-acid chain; its full sequence is T-complex protein 1 subunit zeta (546 aa).

Ser-2 is subject to N-acetylserine. The residue at position 249 (Ser-249) is a Phosphoserine.

Belongs to the TCP-1 chaperonin family. In terms of assembly, heterooligomeric complex of about 850 to 900 kDa that forms two stacked rings, 12 to 16 nm in diameter.

Its subcellular location is the cytoplasm. Its function is as follows. Molecular chaperone; assists the folding of proteins upon ATP hydrolysis. Known to play a role, in vitro, in the folding of actin and tubulin. In yeast may play a role in mitotic spindle formation. The polypeptide is T-complex protein 1 subunit zeta (CCT6) (Saccharomyces cerevisiae (strain ATCC 204508 / S288c) (Baker's yeast)).